Reading from the N-terminus, the 860-residue chain is Eukaryotic translation initiation factor 3 subunit C (860 aa).

A disordered region spans residues 1 to 76; that stretch reads MSRFFYGNDS…SEESEEEDVV (76 aa). Residues 10-51 show a composition bias toward acidic residues; the sequence is SDSDSSGSDEEELYSDEEVEQSEEESSEEDASSEEESSEDED. In terms of domain architecture, PCI spans 599–773; it reads FHMHINLELL…DAIVFRKGVE (175 aa). Positions 812–860 are disordered; the sequence is RDQGAGARGGRGPRGGGQARGGPRLPGGQQRRPGGQQFGGGALGGAIKA. The span at 817-831 shows a compositional bias: gly residues; the sequence is GARGGRGPRGGGQAR. A compositionally biased stretch (low complexity) spans 832-846; sequence GGPRLPGGQQRRPGG. Positions 847–860 are enriched in gly residues; that stretch reads QQFGGGALGGAIKA.

This sequence belongs to the eIF-3 subunit C family. Component of the eukaryotic translation initiation factor 3 (eIF-3) complex.

The protein resides in the cytoplasm. Functionally, component of the eukaryotic translation initiation factor 3 (eIF-3) complex, which is involved in protein synthesis of a specialized repertoire of mRNAs and, together with other initiation factors, stimulates binding of mRNA and methionyl-tRNAi to the 40S ribosome. The eIF-3 complex specifically targets and initiates translation of a subset of mRNAs involved in cell proliferation. In Emericella nidulans (strain FGSC A4 / ATCC 38163 / CBS 112.46 / NRRL 194 / M139) (Aspergillus nidulans), this protein is Eukaryotic translation initiation factor 3 subunit C (nip1).